The following is a 221-amino-acid chain: NIP3 homolog (221 aa).

The tract at residues 24–55 (GEKTDESVQPQQQTEQSSAQQTTPSAKAVSNP) is disordered. K26 is covalently cross-linked (Glycyl lysine isopeptide (Lys-Gly) (interchain with G-Cter in ubiquitin)). The span at 32-49 (QPQQQTEQSSAQQTTPSA) shows a compositional bias: low complexity. The chain crosses the membrane as a helical span at residues 189–209 (VVFGFLVTNIFSFVVGAAVGF). The tract at residues 189–209 (VVFGFLVTNIFSFVVGAAVGF) is required for initiation of apoptosis.

Belongs to the NIP3 family. In terms of assembly, homodimer; via transmembrane domain. Interacts with ced-3 and ced-9. Post-translationally, ubiquitinated and degraded by the proteasome. Under oxidative stress conditions, ubiquitinated at Lys-26 in a pink-1 dependent manner. Colocalizes with pdr-1 and may be ubiquitinated by it. As to expression, expressed in all somatic tissues including neurons, pharynx, intestine, body wall muscles and vulva muscles.

The protein resides in the mitochondrion outer membrane. Initiates apoptosis in a BH3-independent mechanism possibly by recruiting ced-3 to mitochondria and other cytoplasmic membranes. Has a role in lifespan and tumor growth. Required for the induction of mitophagy under stress conditions. This chain is NIP3 homolog, found in Caenorhabditis elegans.